A 212-amino-acid polypeptide reads, in one-letter code: Octanoyltransferase (212 aa).

A BPL/LPL catalytic domain is found at 31 to 209 (AETQDEIWLV…HFADLLGYNI (179 aa)). Substrate-binding positions include 70-77 (RGGQITYH), 138-140 (SLG), and 151-153 (GLA). Residue cysteine 169 is the Acyl-thioester intermediate of the active site.

Belongs to the LipB family.

It is found in the cytoplasm. The enzyme catalyses octanoyl-[ACP] + L-lysyl-[protein] = N(6)-octanoyl-L-lysyl-[protein] + holo-[ACP] + H(+). The protein operates within protein modification; protein lipoylation via endogenous pathway; protein N(6)-(lipoyl)lysine from octanoyl-[acyl-carrier-protein]: step 1/2. Functionally, catalyzes the transfer of endogenously produced octanoic acid from octanoyl-acyl-carrier-protein onto the lipoyl domains of lipoate-dependent enzymes. Lipoyl-ACP can also act as a substrate although octanoyl-ACP is likely to be the physiological substrate. The sequence is that of Octanoyltransferase from Haemophilus influenzae (strain PittEE).